The primary structure comprises 182 residues: NADH-quinone oxidoreductase subunit I (182 aa).

4Fe-4S ferredoxin-type domains are found at residues 52-82 and 92-121; these read LTRD…LQKA and EFFR…LTPD. The [4Fe-4S] cluster site is built by Cys62, Cys65, Cys68, Cys72, Cys101, Cys104, Cys107, and Cys111.

The protein belongs to the complex I 23 kDa subunit family. NDH-1 is composed of 13 different subunits. Subunits NuoA, H, J, K, L, M, N constitute the membrane sector of the complex. [4Fe-4S] cluster serves as cofactor.

It localises to the cell inner membrane. It catalyses the reaction a quinone + NADH + 5 H(+)(in) = a quinol + NAD(+) + 4 H(+)(out). NDH-1 shuttles electrons from NADH, via FMN and iron-sulfur (Fe-S) centers, to quinones in the respiratory chain. The immediate electron acceptor for the enzyme in this species is believed to be ubiquinone. Couples the redox reaction to proton translocation (for every two electrons transferred, four hydrogen ions are translocated across the cytoplasmic membrane), and thus conserves the redox energy in a proton gradient. This chain is NADH-quinone oxidoreductase subunit I, found in Pseudomonas entomophila (strain L48).